Here is a 226-residue protein sequence, read N- to C-terminus: V-type proton ATPase subunit E 1 (226 aa).

Ala2 is subject to N-acetylalanine. Position 56 is a phosphotyrosine (Tyr56).

It belongs to the V-ATPase E subunit family. As to quaternary structure, V-ATPase is a heteromultimeric enzyme made up of two complexes: the ATP-hydrolytic V1 complex and the proton translocation V0 complex. The V1 complex consists of three catalytic AB heterodimers that form a heterohexamer, three peripheral stalks each consisting of EG heterodimers, one central rotor including subunits D and F, and the regulatory subunits C and H. The proton translocation complex V0 consists of the proton transport subunit a, a ring of proteolipid subunits c9c'', rotary subunit d, subunits e and f, and the accessory subunits ATP6AP1/Ac45 and ATP6AP2/PRR. Interacts with RABL2/RABL2A; binds preferentially to GTP-bound RABL2. Interacts with ALDOC. Interacts with RAB11B. As to expression, expressed within the midpiece of sperm tail (at protein level). Kidney; localizes to early distal nephron, encompassing thick ascending limbs and distal convoluted tubules (at protein level).

It is found in the apical cell membrane. The protein resides in the cytoplasmic vesicle. The protein localises to the secretory vesicle. Its subcellular location is the synaptic vesicle membrane. It localises to the clathrin-coated vesicle membrane. Functionally, subunit of the V1 complex of vacuolar(H+)-ATPase (V-ATPase), a multisubunit enzyme composed of a peripheral complex (V1) that hydrolyzes ATP and a membrane integral complex (V0) that translocates protons. V-ATPase is responsible for acidifying and maintaining the pH of intracellular compartments and in some cell types, is targeted to the plasma membrane, where it is responsible for acidifying the extracellular environment. This chain is V-type proton ATPase subunit E 1 (Atp6v1e1), found in Mus musculus (Mouse).